A 311-amino-acid polypeptide reads, in one-letter code: Malate dehydrogenase (311 aa).

NAD(+) contacts are provided by residues 7-13 (GAAGGIG) and D34. Residues R81 and R87 each contribute to the substrate site. NAD(+)-binding positions include N94 and 117–119 (ITN). The substrate site is built by N119 and R153. H177 acts as the Proton acceptor in catalysis. Residue M227 participates in NAD(+) binding.

This sequence belongs to the LDH/MDH superfamily. MDH type 1 family. In terms of assembly, homodimer.

The catalysed reaction is (S)-malate + NAD(+) = oxaloacetate + NADH + H(+). In terms of biological role, catalyzes the reversible oxidation of malate to oxaloacetate. This chain is Malate dehydrogenase, found in Shewanella piezotolerans (strain WP3 / JCM 13877).